A 109-amino-acid polypeptide reads, in one-letter code: Nucleoid-associated protein Ping_2276 (109 aa).

Belongs to the YbaB/EbfC family. In terms of assembly, homodimer.

The protein localises to the cytoplasm. Its subcellular location is the nucleoid. Functionally, binds to DNA and alters its conformation. May be involved in regulation of gene expression, nucleoid organization and DNA protection. This chain is Nucleoid-associated protein Ping_2276, found in Psychromonas ingrahamii (strain DSM 17664 / CCUG 51855 / 37).